A 2210-amino-acid polypeptide reads, in one-letter code: Mediator of RNA polymerase II transcription subunit 13-like (2210 aa).

Residues 391–400 show a composition bias toward polar residues; sequence SKRSQMSTPT. Disordered stretches follow at residues 391 to 414, 435 to 489, and 519 to 582; these read SKRSQMSTPTLEEEPASNPATWDF, AVGP…PFHH, and VSSS…NPAL. The span at 445–458 shows a compositional bias: low complexity; the sequence is SQPGFSAGPSSSSS. The span at 468–480 shows a compositional bias: basic and acidic residues; the sequence is KTAERQEKGDKLQ. Over residues 533-544 the composition is skewed to polar residues; it reads SRNTSKQMNLNP. The span at 551-560 shows a compositional bias: pro residues; the sequence is PISPLPPTLS. Residues S553 and S560 each carry the phosphoserine modification. Positions 669–673 match the LXXLL motif 1 motif; it reads LQRLL. The segment covering 736-752 has biased composition (basic and acidic residues); that stretch reads GTEKDSLKKNKSEDGFG. Residues 736-770 are disordered; sequence GTEKDSLKKNKSEDGFGTKDVTTPGHSTPVPDGKN. A phosphoserine mark is found at S817, S826, and S923. Residues 1016–1096 are disordered; it reads PQMNTPVTLN…STTRPLNSVE (81 aa). The segment covering 1025–1036 has biased composition (low complexity); that stretch reads NSAAPASNSGAG. The segment covering 1077–1092 has biased composition (polar residues); it reads TDQGSPASTPSTTRPL. Residues 1225–1229 carry the LXXLL motif 2 motif; it reads LLLLL. The segment at 1380–1401 is leucine-zipper; the sequence is LPIPTLLVGYDKDFLTISPFSL. 2 disordered regions span residues 1530-1656 and 2045-2080; these read QTPP…VTER and GNLHSSPNSSPVPSPGSPSGIGVGSHFQHSRSQGER. Residues 1531–1608 are compositionally biased toward low complexity; it reads TPPAAAQGQA…ISTTSSSGFS (78 aa). The segment covering 1615-1629 has biased composition (polar residues); it reads NPSTGGISADRTQGN. Residues 1637–1650 show a composition bias toward low complexity; it reads DPGQSSSQPSQDGQ. Phosphoserine is present on S2083.

It belongs to the Mediator complex subunit 13 family. As to quaternary structure, component of the Mediator complex, which is composed of MED1, MED4, MED6, MED7, MED8, MED9, MED10, MED11, MED12, MED13, MED13L, MED14, MED15, MED16, MED17, MED18, MED19, MED20, MED21, MED22, MED23, MED24, MED25, MED26, MED27, MED29, MED30, MED31, CCNC, CDK8 and CDC2L6/CDK11. The MED12, MED13, CCNC and CDK8 subunits form a distinct module termed the CDK8 module. Mediator containing the CDK8 module is less active than Mediator lacking this module in supporting transcriptional activation. Individual preparations of the Mediator complex lacking one or more distinct subunits have been variously termed ARC, CRSP, DRIP, PC2, SMCC and TRAP. In terms of tissue distribution, highly expressed in brain (cerebellum), heart (aorta), skeletal muscle, kidney, placenta and peripheral blood leukocytes. Highly expressed in fetal brain.

It is found in the nucleus. Functionally, component of the Mediator complex, a coactivator involved in the regulated transcription of nearly all RNA polymerase II-dependent genes. Mediator functions as a bridge to convey information from gene-specific regulatory proteins to the basal RNA polymerase II transcription machinery. Mediator is recruited to promoters by direct interactions with regulatory proteins and serves as a scaffold for the assembly of a functional preinitiation complex with RNA polymerase II and the general transcription factors. This subunit may specifically regulate transcription of targets of the Wnt signaling pathway and SHH signaling pathway. The chain is Mediator of RNA polymerase II transcription subunit 13-like (MED13L) from Homo sapiens (Human).